Consider the following 99-residue polypeptide: Transmembrane protein 14A (99 aa).

Helical transmembrane passes span Met1–Lys21, Gly24–Tyr44, and Pro79–Leu99.

Belongs to the TMEM14 family. Expressed at significantly higher levels in ovarian cancer tissues than in normal tissues (at protein level).

The protein resides in the mitochondrion membrane. It is found in the endoplasmic reticulum membrane. Functionally, inhibits apoptosis via negative regulation of the mitochondrial outer membrane permeabilization involved in apoptotic signaling pathway. In Homo sapiens (Human), this protein is Transmembrane protein 14A (TMEM14A).